Reading from the N-terminus, the 329-residue chain is Urease accessory protein UreD 2 (329 aa).

Residues 100 to 120 (YSRPSDSSKFTNGTQSANSNT) form a disordered region. Over residues 103-120 (PSDSSKFTNGTQSANSNT) the composition is skewed to polar residues.

Belongs to the UreD family. As to quaternary structure, ureD, UreF and UreG form a complex that acts as a GTP-hydrolysis-dependent molecular chaperone, activating the urease apoprotein by helping to assemble the nickel containing metallocenter of UreC. The UreE protein probably delivers the nickel.

The protein resides in the cytoplasm. Its function is as follows. Required for maturation of urease via the functional incorporation of the urease nickel metallocenter. The protein is Urease accessory protein UreD 2 of Psychrobacter cryohalolentis (strain ATCC BAA-1226 / DSM 17306 / VKM B-2378 / K5).